Here is a 289-residue protein sequence, read N- to C-terminus: tRNA acetyltransferase TAN1 (289 aa).

Over residues 1-10 (MGEKRNRNGK) the composition is skewed to basic and acidic residues. 2 disordered regions span residues 1–31 (MGEK…DPGT) and 64–83 (DIKE…LSIE). S72 is subject to Phosphoserine. One can recognise a THUMP domain in the interval 146-259 (ADPKNMVKRT…KSNIGMCVVD (114 aa)).

The protein resides in the cytoplasm. It is found in the nucleus. Functionally, probable tRNA acetyltransferase required for the formation of the modified nucleoside N(4)-acetylcytidine in serine and leucine tRNAs. Binds RNA. The protein is tRNA acetyltransferase TAN1 (TAN1) of Saccharomyces cerevisiae (strain ATCC 204508 / S288c) (Baker's yeast).